We begin with the raw amino-acid sequence, 148 residues long: Augurin (148 aa).

Residues 1–31 (MGTSSARPAVLALAGLALLLLLCLGPGDVSG) form the signal peptide. Propeptides lie at residues 32–68 (NKLKKMLQKREGPVPSKTNVAVSEHTAKEFLGGLKRA) and 133–148 (SREGFRHGASVNYDDY).

It belongs to the augurin family. Expressed in the brain, with expression in the choroid plexus and the ventricular ependymal cells (at protein level).

The protein localises to the secreted. It localises to the cytoplasm. Its subcellular location is the apical cell membrane. Functionally, probable hormone that may attenuate cell proliferation and induce senescence of oligodendrocyte and neural precursor cells in the central nervous system. ECRG4-induced senescence is characterized by G1 arrest, RB1 dephosphorylation and accelerated CCND1 and CCND3 proteasomal degradation. The protein is Augurin of Rattus norvegicus (Rat).